Consider the following 284-residue polypeptide: MAQEKMELDLELPPGSAAAPSDGGGLRRSNSAPLIHGLSDNSQVFQGSVLRTRRNSTTVMNRHSLFVPSSPIRIPSSRLHQIKQEEGMNLMNRETVHEREVQVAMQMSQSWEESLSLSNNDFEKSSSPKQVDFVPVSPAPSPTRGIGKQCFSPSLQSLVSSSGLPPSPSPSPTRRFSSRRSQSPINCIRPSVLGPIKRKGVTEMEDHPKRLFQGSTNMLSSEALHQPDLGGCLSAHTLDDNRSSAGSSCDSPAEAGASTGSPVSLSDSRSPFLPVDLTAKLPID.

Disordered stretches follow at residues 1 to 32, 112 to 198, and 235 to 284; these read MAQE…SNSA, EESL…PIKR, and AHTL…LPID. Low complexity-rich tracts occupy residues 152-164 and 172-184; these read SPSL…SSGL and PTRR…SQSP. A compositionally biased stretch (polar residues) spans 258–269; that stretch reads STGSPVSLSDSR.

Belongs to the FAM122 family.

Its subcellular location is the nucleus. The protein resides in the cytoplasm. Acts as an inhibitor of serine/threonine-protein phosphatase 2A (PP2A) activity. Potentiates ubiquitin-mediated proteasomal degradation of serine/threonine-protein phosphatase 2A catalytic subunit alpha (PPP2CA). Inhibits PP2A-mediated dephosphorylation of WEE1, promoting ubiquitin-mediated proteolysis of WEE1, thereby releasing G2/M checkpoint. The chain is P2R1A-PPP2R2A-interacting phosphatase regulator 1 from Gallus gallus (Chicken).